A 291-amino-acid polypeptide reads, in one-letter code: ATP phosphoribosyltransferase 1 (291 aa).

This sequence belongs to the ATP phosphoribosyltransferase family. Long subfamily. The cofactor is Mg(2+).

It localises to the cytoplasm. It carries out the reaction 1-(5-phospho-beta-D-ribosyl)-ATP + diphosphate = 5-phospho-alpha-D-ribose 1-diphosphate + ATP. It functions in the pathway amino-acid biosynthesis; L-histidine biosynthesis; L-histidine from 5-phospho-alpha-D-ribose 1-diphosphate: step 1/9. With respect to regulation, feedback inhibited by histidine. In terms of biological role, catalyzes the condensation of ATP and 5-phosphoribose 1-diphosphate to form N'-(5'-phosphoribosyl)-ATP (PR-ATP). Has a crucial role in the pathway because the rate of histidine biosynthesis seems to be controlled primarily by regulation of HisG enzymatic activity. The sequence is that of ATP phosphoribosyltransferase 1 from Geobacter sulfurreducens (strain ATCC 51573 / DSM 12127 / PCA).